Consider the following 280-residue polypeptide: Phosphonates import ATP-binding protein PhnC 1 (280 aa).

The ABC transporter domain maps to 2–246 (LRIENLDKRY…VLTRIYGEED (245 aa)). Residue 35 to 42 (GPSGAGKS) participates in ATP binding. Residues 247–266 (WSKTSDEDADSVDAPPRAAD) form a disordered region.

Belongs to the ABC transporter superfamily. Phosphonates importer (TC 3.A.1.9.1) family. As to quaternary structure, the complex is composed of two ATP-binding proteins (PhnC), two transmembrane proteins (PhnE) and a solute-binding protein (PhnD).

It is found in the cell inner membrane. The catalysed reaction is phosphonate(out) + ATP + H2O = phosphonate(in) + ADP + phosphate + H(+). Part of the ABC transporter complex PhnCDE involved in phosphonates import. Responsible for energy coupling to the transport system. The protein is Phosphonates import ATP-binding protein PhnC 1 of Rhodopseudomonas palustris (strain HaA2).